The following is a 719-amino-acid chain: High-osmolarity-induced transcription protein 1 (719 aa).

The segment covering 68–88 (HISPTTGSESASGSNASTLRN) has biased composition (polar residues). Disordered regions lie at residues 68–90 (HISP…RNDG), 102–159 (AAIS…NEIS), 353–402 (THQQ…ASAA), and 496–610 (TTSE…TKPN). Positions 117–127 (IGEKLSNEERV) are enriched in basic and acidic residues. The span at 128-143 (NSNVSASNSTTAGTGR) shows a compositional bias: low complexity. Polar residues-rich tracts occupy residues 144–159 (MLSQ…NEIS), 353–369 (THQQ…NAST), 387–398 (TQSNNNASTNDH), and 496–522 (TTSE…STLP). S146 and S153 each carry phosphoserine. Positions 535 to 572 (DDDGYQEDDDDDGDDEGDGRDNEEDSTAEEDEVDDEIE) are enriched in acidic residues. Residues 581–601 (NKRRRSLHHKKSNSLNGRRKL) show a composition bias toward basic residues.

It belongs to the HOT1 family. Interacts with HOG1. Hyperphosphorylated during acute stress.

Its subcellular location is the nucleus. Functionally, required for a complete transcriptional response to osmotic stress, through recruitment of HOG1 followed by pol II recruitment to the promoters of GPD1 and other HOG-dependent genes. The sequence is that of High-osmolarity-induced transcription protein 1 (HOT1) from Saccharomyces cerevisiae (strain ATCC 204508 / S288c) (Baker's yeast).